The chain runs to 393 residues: S-adenosylmethionine synthase 4 (393 aa).

Residue glutamate 9 participates in Mg(2+) binding. Histidine 15 lines the ATP pocket. Glutamate 43 contributes to the K(+) binding site. L-methionine-binding residues include glutamate 56 and glutamine 99. Residues 167–169, 235–238, aspartate 246, 252–253, alanine 269, lysine 273, and lysine 277 contribute to the ATP site; these read DGK, SGRF, and RK. Aspartate 246 contacts L-methionine. Lysine 277 provides a ligand contact to L-methionine.

Belongs to the AdoMet synthase family. As to quaternary structure, homotetramer. Requires Mn(2+) as cofactor. The cofactor is Mg(2+). It depends on Co(2+) as a cofactor. K(+) is required as a cofactor.

It is found in the cytoplasm. The enzyme catalyses L-methionine + ATP + H2O = S-adenosyl-L-methionine + phosphate + diphosphate. It participates in amino-acid biosynthesis; S-adenosyl-L-methionine biosynthesis; S-adenosyl-L-methionine from L-methionine: step 1/1. Catalyzes the formation of S-adenosylmethionine from methionine and ATP. The reaction comprises two steps that are both catalyzed by the same enzyme: formation of S-adenosylmethionine (AdoMet) and triphosphate, and subsequent hydrolysis of the triphosphate. The polypeptide is S-adenosylmethionine synthase 4 (METK4) (Vitis vinifera (Grape)).